The sequence spans 537 residues: 6-phosphogluconate dehydrogenase, decarboxylating 2, chloroplastic (537 aa).

The N-terminal 44 residues, 1 to 44 (MRSEVPSSTSPSFLSPPFIHLPLLSLSSPTPLPHSSSSTFSLFS), are a transit peptide targeting the chloroplast. NADP(+) is bound by residues 55 to 60 (GLAVMG), 78 to 80 (NRT), 122 to 124 (VKA), and Asn-150. Residues Asn-150 and 176–178 (SGG) contribute to the substrate site. Lys-230 (proton acceptor) is an active-site residue. A substrate-binding site is contributed by 233–234 (HN). The active-site Proton donor is the Glu-237. Substrate contacts are provided by Tyr-238, Lys-308, Arg-335, Arg-500, and His-506.

The protein belongs to the 6-phosphogluconate dehydrogenase family. As to quaternary structure, homodimer.

It is found in the plastid. The protein resides in the chloroplast. The catalysed reaction is 6-phospho-D-gluconate + NADP(+) = D-ribulose 5-phosphate + CO2 + NADPH. It participates in carbohydrate degradation; pentose phosphate pathway; D-ribulose 5-phosphate from D-glucose 6-phosphate (oxidative stage): step 3/3. Its function is as follows. Catalyzes the oxidative decarboxylation of 6-phosphogluconate to ribulose 5-phosphate and CO(2), with concomitant reduction of NADP to NADPH. This is 6-phosphogluconate dehydrogenase, decarboxylating 2, chloroplastic from Spinacia oleracea (Spinach).